The following is a 244-amino-acid chain: tRNA pseudouridine synthase A (244 aa).

Asp52 acts as the Nucleophile in catalysis. Substrate is bound at residue Tyr110.

It belongs to the tRNA pseudouridine synthase TruA family. Homodimer.

The enzyme catalyses uridine(38/39/40) in tRNA = pseudouridine(38/39/40) in tRNA. In terms of biological role, formation of pseudouridine at positions 38, 39 and 40 in the anticodon stem and loop of transfer RNAs. The polypeptide is tRNA pseudouridine synthase A (Geotalea uraniireducens (strain Rf4) (Geobacter uraniireducens)).